Reading from the N-terminus, the 701-residue chain is Acetyl-coenzyme A synthetase, cytoplasmic (701 aa).

A disordered region spans residues 1 to 41 (MGLPEERVRSGSGSRGQEEAGAGGRARSWSPPPEVSRSAHV). An interaction with TFEB region spans residues 1 to 107 (MGLPEERVRS…GATTNICYNV (107 aa)). A phosphoserine mark is found at Ser-28, Ser-30, and Ser-36. Residue 219-222 (RGEK) participates in CoA binding. A phosphoserine mark is found at Ser-263, Ser-265, and Ser-267. Thr-363 contributes to the CoA binding site. At Lys-418 the chain carries N6-acetyllysine. ATP-binding positions include 439 to 441 (GEP), 463 to 468 (DTFWQT), Asp-552, and Arg-567. Residues Ser-575 and Arg-636 each contribute to the CoA site. The short motif at 656–668 (KTRSGKIMRRVLR) is the Nuclear localization signal element. Ser-659 is subject to Phosphoserine; by AMPK. Lys-661 carries the N6-acetyllysine modification.

Belongs to the ATP-dependent AMP-binding enzyme family. In terms of assembly, monomer. Interacts with TFEB. AMPK-mediated phosphorylated form at Ser-659 interacts with KPNA1; this interaction results in nuclear translocation of ACSS2. Interacts with the 'Thr-172' phosphorylated form of PRKAA2. Interacts with CREBBP. In terms of processing, reversibly acetylated at Lys-661. The acetyl-CoA synthase activity is inhibited by acetylation and activated by deacetylation mediated by the deacetylases SIRT1 and SIRT3. Post-translationally, glucose deprivation results in its AMPK-dependent phosphorylation at Ser-659, which leads to exposure of its nuclear localization signal, required for its interaction with KPNA1 and subsequent translocation to the nucleus.

The protein localises to the cytoplasm. It is found in the cytosol. It localises to the nucleus. The enzyme catalyses acetate + ATP + CoA = acetyl-CoA + AMP + diphosphate. It catalyses the reaction propanoate + ATP + CoA = propanoyl-CoA + AMP + diphosphate. With respect to regulation, inhibited by acetylation at Lys-661 and activated by deacetylation mediated by the deacetylases SIRT1 and SIRT3. Functionally, catalyzes the synthesis of acetyl-CoA from short-chain fatty acids. Acetate is the preferred substrate. Can also utilize propionate with a much lower affinity. Nuclear ACSS2 promotes glucose deprivation-induced lysosomal biogenesis and autophagy, tumor cell survival and brain tumorigenesis. Glucose deprivation results in AMPK-mediated phosphorylation of ACSS2 leading to its translocation to the nucleus where it binds to TFEB and locally produces acetyl-CoA for histone acetylation in the promoter regions of TFEB target genes thereby activating their transcription. The regulation of genes associated with autophagy and lysosomal activity through ACSS2 is important for brain tumorigenesis and tumor survival. Acts as a chromatin-bound transcriptional coactivator that up-regulates histone acetylation and expression of neuronal genes. Can be recruited to the loci of memory-related neuronal genes to maintain a local acetyl-CoA pool, providing the substrate for histone acetylation and promoting the expression of specific genes, which is essential for maintaining long-term spatial memory. This chain is Acetyl-coenzyme A synthetase, cytoplasmic (ACSS2), found in Homo sapiens (Human).